A 342-amino-acid chain; its full sequence is Global transcription regulator FGP1 (342 aa).

The tract at residues 91 to 113 is disordered; sequence FSPGEKKRASKKPKKQAGVAKAY.

The protein belongs to the MIT1/WOR1 family.

The protein localises to the nucleus. Its function is as follows. Global transcriptional regulator of pathogenicity. Regulates many genes during growth in putrescine medium and during infection. Involved in the developmental processes of conidium formation and sexual reproduction and modulates a morphological change that accompanies mycotoxin production. The protein is Global transcription regulator FGP1 of Gibberella zeae (strain ATCC MYA-4620 / CBS 123657 / FGSC 9075 / NRRL 31084 / PH-1) (Wheat head blight fungus).